A 165-amino-acid polypeptide reads, in one-letter code: MLMPKKNRIAIYELLFKEGVMVAKKDVHMPKHPELADKNVPNLHVMKAMQSLKSRGYVKEQFAWRHFYWYLTNEGIQYLRDYLHLPPEIVPATLRRSRPETGRPRPKGPEGERPARFTRGEADRDTYRRSAVPPGADKKAEAGAGSATEFQFRGGFGRGRGQPPQ.

Position 12 is a phosphotyrosine (Tyr-12). The interval 90–165 is disordered; the sequence is VPATLRRSRP…FGRGRGQPPQ (76 aa). The span at 97–128 shows a compositional bias: basic and acidic residues; sequence SRPETGRPRPKGPEGERPARFTRGEADRDTYR. Residues Lys-138 and Lys-139 each participate in a glycyl lysine isopeptide (Lys-Gly) (interchain with G-Cter in ubiquitin) cross-link. A Phosphoserine modification is found at Ser-146. The residue at position 153 (Arg-153) is an Omega-N-methylarginine. Positions 154 to 165 are enriched in gly residues; it reads GGFGRGRGQPPQ. Symmetric dimethylarginine occurs at positions 158 and 160.

It belongs to the eukaryotic ribosomal protein eS10 family. In terms of assembly, component of the small ribosomal subunit. The methylated form interacts with NPM1. In terms of processing, methylated by PRMT5. Methylation is necessary for its interaction with NPS1, its localization in the granular component (GC) region of the nucleolus, for the proper assembly of ribosomes, protein synthesis and optimal cell proliferation. Post-translationally, monoubiquitinated by ZNF598 when a ribosome has stalled during translation of poly(A) sequences, leading to preclude synthesis of a long poly-lysine tail and initiate the ribosome quality control (RQC) pathway to degrade the potentially detrimental aberrant nascent polypeptide. Deubiquitinated by OTUD3 and USP21, antagonizing ZNF598 activity. Deubiquitinated by OTUD1, antagonizing ZNF598 activity and stimulating formation of polysomes: deubiquitination by OTUD1 promotes stability and translation of a subset mRNAs with a high abundance of rare codons can limit the translation rate. Deubiquitinated by USP10.

Its subcellular location is the cytoplasm. It localises to the nucleus. It is found in the nucleolus. Functionally, component of the 40S ribosomal subunit. The ribosome is a large ribonucleoprotein complex responsible for the synthesis of proteins in the cell. The sequence is that of Small ribosomal subunit protein eS10 (Rps10) from Rattus norvegicus (Rat).